Here is a 443-residue protein sequence, read N- to C-terminus: ATP-dependent protease ATPase subunit HslU (443 aa).

Residues Ile18, 60-65 (GVGKTE), Asp256, Glu321, and Arg393 each bind ATP.

The protein belongs to the ClpX chaperone family. HslU subfamily. As to quaternary structure, a double ring-shaped homohexamer of HslV is capped on each side by a ring-shaped HslU homohexamer. The assembly of the HslU/HslV complex is dependent on binding of ATP.

It localises to the cytoplasm. Functionally, ATPase subunit of a proteasome-like degradation complex; this subunit has chaperone activity. The binding of ATP and its subsequent hydrolysis by HslU are essential for unfolding of protein substrates subsequently hydrolyzed by HslV. HslU recognizes the N-terminal part of its protein substrates and unfolds these before they are guided to HslV for hydrolysis. This is ATP-dependent protease ATPase subunit HslU from Nitrosospira multiformis (strain ATCC 25196 / NCIMB 11849 / C 71).